The primary structure comprises 210 residues: ATP-dependent Clp protease proteolytic subunit (210 aa).

The Nucleophile role is filled by Ser-106. Residue His-131 is part of the active site.

It belongs to the peptidase S14 family. In terms of assembly, fourteen ClpP subunits assemble into 2 heptameric rings which stack back to back to give a disk-like structure with a central cavity, resembling the structure of eukaryotic proteasomes.

The protein resides in the cytoplasm. It carries out the reaction Hydrolysis of proteins to small peptides in the presence of ATP and magnesium. alpha-casein is the usual test substrate. In the absence of ATP, only oligopeptides shorter than five residues are hydrolyzed (such as succinyl-Leu-Tyr-|-NHMec, and Leu-Tyr-Leu-|-Tyr-Trp, in which cleavage of the -Tyr-|-Leu- and -Tyr-|-Trp bonds also occurs).. Functionally, cleaves peptides in various proteins in a process that requires ATP hydrolysis. Has a chymotrypsin-like activity. Plays a major role in the degradation of misfolded proteins. This is ATP-dependent Clp protease proteolytic subunit from Afipia carboxidovorans (strain ATCC 49405 / DSM 1227 / KCTC 32145 / OM5) (Oligotropha carboxidovorans).